A 213-amino-acid chain; its full sequence is FMN-dependent NADH:quinone oxidoreductase 1 (213 aa).

Serine 18 to serine 20 contacts FMN.

It belongs to the azoreductase type 1 family. In terms of assembly, homodimer. FMN serves as cofactor.

The catalysed reaction is 2 a quinone + NADH + H(+) = 2 a 1,4-benzosemiquinone + NAD(+). It carries out the reaction N,N-dimethyl-1,4-phenylenediamine + anthranilate + 2 NAD(+) = 2-(4-dimethylaminophenyl)diazenylbenzoate + 2 NADH + 2 H(+). Quinone reductase that provides resistance to thiol-specific stress caused by electrophilic quinones. In terms of biological role, also exhibits azoreductase activity. Catalyzes the reductive cleavage of the azo bond in aromatic azo compounds to the corresponding amines. The protein is FMN-dependent NADH:quinone oxidoreductase 1 of Bacillus cereus (strain ATCC 10987 / NRS 248).